A 146-amino-acid polypeptide reads, in one-letter code: Acidic phospholipase A2 D (146 aa).

A signal peptide spans 1-21 (MNPAHLLILAAVCVSPLGASS). Positions 22–27 (NRPMPL) are excised as a propeptide. 7 disulfide bridges follow: C38/C98, C53/C145, C55/C71, C70/C126, C77/C119, C87/C112, and C105/C117. Positions 54, 56, and 58 each coordinate Ca(2+). H74 is a catalytic residue. D75 lines the Ca(2+) pocket. The active site involves D120.

It belongs to the phospholipase A2 family. Group I subfamily. D49 sub-subfamily. Requires Ca(2+) as cofactor. As to expression, expressed by the venom gland.

The protein resides in the secreted. It carries out the reaction a 1,2-diacyl-sn-glycero-3-phosphocholine + H2O = a 1-acyl-sn-glycero-3-phosphocholine + a fatty acid + H(+). Functionally, PLA2 catalyzes the calcium-dependent hydrolysis of the 2-acyl groups in 3-sn-phosphoglycerides. This chain is Acidic phospholipase A2 D, found in Naja sputatrix (Malayan spitting cobra).